Consider the following 125-residue polypeptide: Prefoldin subunit beta (125 aa).

Belongs to the prefoldin subunit beta family. In terms of assembly, heterohexamer of two alpha and four beta subunits.

Its subcellular location is the cytoplasm. Its function is as follows. Molecular chaperone capable of stabilizing a range of proteins. Seems to fulfill an ATP-independent, HSP70-like function in archaeal de novo protein folding. The sequence is that of Prefoldin subunit beta from Sulfolobus acidocaldarius (strain ATCC 33909 / DSM 639 / JCM 8929 / NBRC 15157 / NCIMB 11770).